We begin with the raw amino-acid sequence, 168 residues long: HTH-type transcriptional regulator IscR (168 aa).

One can recognise an HTH rrf2-type domain in the interval 2-131; sequence KLTSKGRYAV…NNITLGELMT (130 aa). Residues 28–51 constitute a DNA-binding region (H-T-H motif); that stretch reads LADISERQGISLSYLEQLFSKLRK. The [2Fe-2S] cluster site is built by Cys92, Cys98, and Cys104.

[2Fe-2S] cluster serves as cofactor.

In terms of biological role, regulates the transcription of several operons and genes involved in the biogenesis of Fe-S clusters and Fe-S-containing proteins. In Vibrio parahaemolyticus serotype O3:K6 (strain RIMD 2210633), this protein is HTH-type transcriptional regulator IscR.